Consider the following 243-residue polypeptide: F-box protein pof15 (243 aa).

Residues 28–73 enclose the F-box domain; sequence QTSSTLLPVEVIDSVMQYLPAHDVIQSSFASYPLTLIANKIIRARL.

It participates in protein modification; protein ubiquitination. Functionally, probable substrate recognition component of a SCF (SKP1-CUL1-F-box protein) E3 ubiquitin-protein ligase complex that mediates the ubiquitination and subsequent proteasomal degradation of target proteins. This is F-box protein pof15 (pof15) from Schizosaccharomyces pombe (strain 972 / ATCC 24843) (Fission yeast).